Here is a 416-residue protein sequence, read N- to C-terminus: Serine hydroxymethyltransferase (416 aa).

(6S)-5,6,7,8-tetrahydrofolate-binding positions include Leu118 and 122–124 (GHL). At Lys226 the chain carries N6-(pyridoxal phosphate)lysine. Residue 350–352 (SPF) coordinates (6S)-5,6,7,8-tetrahydrofolate.

Belongs to the SHMT family. In terms of assembly, homodimer. Requires pyridoxal 5'-phosphate as cofactor.

Its subcellular location is the cytoplasm. It carries out the reaction (6R)-5,10-methylene-5,6,7,8-tetrahydrofolate + glycine + H2O = (6S)-5,6,7,8-tetrahydrofolate + L-serine. It participates in one-carbon metabolism; tetrahydrofolate interconversion. It functions in the pathway amino-acid biosynthesis; glycine biosynthesis; glycine from L-serine: step 1/1. Functionally, catalyzes the reversible interconversion of serine and glycine with tetrahydrofolate (THF) serving as the one-carbon carrier. This reaction serves as the major source of one-carbon groups required for the biosynthesis of purines, thymidylate, methionine, and other important biomolecules. Also exhibits THF-independent aldolase activity toward beta-hydroxyamino acids, producing glycine and aldehydes, via a retro-aldol mechanism. The sequence is that of Serine hydroxymethyltransferase from Sulfurovum sp. (strain NBC37-1).